The sequence spans 216 residues: Octanoyltransferase (216 aa).

The BPL/LPL catalytic domain occupies 32–207 (ENSPDELWLV…TFSQLLGYEH (176 aa)). Residues 71–78 (RGGQVTYH), 138–140 (SLG), and 151–153 (GLA) contribute to the substrate site. Cys169 (acyl-thioester intermediate) is an active-site residue.

This sequence belongs to the LipB family.

It is found in the cytoplasm. The enzyme catalyses octanoyl-[ACP] + L-lysyl-[protein] = N(6)-octanoyl-L-lysyl-[protein] + holo-[ACP] + H(+). The protein operates within protein modification; protein lipoylation via endogenous pathway; protein N(6)-(lipoyl)lysine from octanoyl-[acyl-carrier-protein]: step 1/2. Functionally, catalyzes the transfer of endogenously produced octanoic acid from octanoyl-acyl-carrier-protein onto the lipoyl domains of lipoate-dependent enzymes. Lipoyl-ACP can also act as a substrate although octanoyl-ACP is likely to be the physiological substrate. This chain is Octanoyltransferase, found in Shewanella amazonensis (strain ATCC BAA-1098 / SB2B).